A 1393-amino-acid chain; its full sequence is Protein strawberry notch homolog 1 (1393 aa).

The disordered stretch occupies residues 129–148 (STRPSVSAPTVRNAMTSAPS). Serine 148 carries the post-translational modification Phosphoserine. The residue at position 149 (lysine 149) is an N6-acetyllysine. Residues serine 162 and serine 214 each carry the phosphoserine modification. Lysine 413 is subject to N6-acetyllysine. Positions 687–840 (APSNNSSPRD…ANSNTNSNSS (154 aa)) are disordered. 3 positions are modified to phosphoserine: serine 692, serine 693, and serine 697. Over residues 697–716 (SPCKENKIKKRKGEEITREA) the composition is skewed to basic and acidic residues. The span at 733–747 (SGSESDASDNEESDY) shows a compositional bias: acidic residues. Phosphoserine occurs at positions 754, 755, and 768. The segment covering 756-775 (GDDDDFNPFLDESNEDDEND) has biased composition (acidic residues). A compositionally biased stretch (basic residues) spans 781–793 (KDHKKNKEKKKKK). 2 positions are modified to phosphoserine: serine 794 and serine 815. A compositionally biased stretch (low complexity) spans 824–840 (PAPNSTPANSNTNSNSS). Residues 843 to 870 (TSQDAVERAQQMKKDLLDKLEKLAEDLP) are a coiled coil. Lysine 1222 carries the post-translational modification N6-acetyllysine. Phosphoserine is present on serine 1386.

Belongs to the SBNO family.

The protein resides in the nucleus. Its function is as follows. Plays a crucial role in the regulation of neural stem cells (NSCs) proliferation. Enhances the phosphorylation of GSK3B through the PI3K-Akt signaling pathway, thereby upregulating the Wnt/beta-catenin signaling pathway and promoting the proliferation of NSCs. Improves ischemic stroke recovery while inhibiting neuroinflammation through small extracellular vesicles (sEVs)-mediated mechanism. Enhances the secretion of sEVs from NSCs, which in turn inhibit both the MAPK and NF-kappaB pathways in microglia. This inhibition suppresses the pro-inflammatory M1 polarization of microglia, promoting a shift towards the M2 anti-inflammatory phenotype, which is beneficial for reducing neuroinflammation. The protein is Protein strawberry notch homolog 1 (SBNO1) of Homo sapiens (Human).